A 637-amino-acid chain; its full sequence is Dihydrolipoyllysine-residue acetyltransferase component of pyruvate dehydrogenase complex, mitochondrial (637 aa).

A mitochondrion-targeting transit peptide spans 1 to 85 (MWRVCVRRAQ…LLGSPGRRSY (85 aa)). Residues 80–100 (PGRRSYSLPPHQKVPLPSLSP) form a disordered region. Residues 90 to 166 (HQKVPLPSLS…PIGSIICITV (77 aa)) form the Lipoyl-binding 1 domain. Serine 99 is subject to Phosphoserine. Residue lysine 131 is modified to N6-lipoyllysine. Disordered regions lie at residues 189–219 (QAAA…PPHM) and 307–340 (LKPQ…PAGP). A compositionally biased stretch (low complexity) spans 201-211 (AAPTAPSAKAP). Residues 218–287 (HMQVSAVGEQ…PLGAPLCIIV (70 aa)) enclose the Lipoyl-binding 2 domain. Residues 310–321 (QAPPPVPPPVAA) are compositionally biased toward pro residues. A compositionally biased stretch (low complexity) spans 322-333 (APPTAQPLAPTP). Residues 345-382 (FVSPLAKKLAAERGIDLTQVKGTGPEGRIIKKDIDSFV) enclose the Peripheral subunit-binding (PSBD) domain. CoA is bound at residue arginine 451. Lysine 456 bears the N6-acetyllysine mark. N6-succinyllysine is present on lysine 463. Residue serine 465 participates in CoA binding. Lysine 537 bears the N6-succinyllysine mark. CoA contacts are provided by serine 556, asparagine 557, and glycine 581. Catalysis depends on residues histidine 610 and aspartate 614.

Belongs to the 2-oxoacid dehydrogenase family. In terms of assembly, part of the pyruvate dehydrogenase complex (PDHc) that is a multi-enzyme complex composed of multiple copies of three enzymes, pyruvate dehydrogenase (subunits PDH1A and PDHB, E1 component), dihydrolipoamide acetyltransferase (DLAT, E2 component), and dihydrolipoamide dehydrogenase (DLD, E3 component) to which is added an additional protein the E3-binding protein (PDHX, E3BP). In terms of structural architecture, the E2 and E3BP components assemble into a 60meric central core with icosahedral symmetry. The central core is decorated with E1 and E3 proteins. Currently, two alternative models for the E2:E3BP stoichiometry are considered as being either 48:12 (E2(48)-E3BP(12)) or 40:20 (E2(40)-E3BP(20)). Interacts with PDK2 and PDK3. Interacts with SIRT4. Interacts with PDHB. The cofactor is (R)-lipoate. Post-translationally, delipoylated at Lys-131 by SIRT4, delipoylation decreases the PHD complex activity. In terms of tissue distribution, detected at higher levels in cauda epididymal spermatazoa than in caput epididymal spermatazoa (at protein level).

The protein localises to the mitochondrion matrix. It carries out the reaction N(6)-[(R)-dihydrolipoyl]-L-lysyl-[protein] + acetyl-CoA = N(6)-[(R)-S(8)-acetyldihydrolipoyl]-L-lysyl-[protein] + CoA. As part of the pyruvate dehydrogenase complex, catalyzes the transfers of an acetyl group to a lipoic acid moiety. The pyruvate dehydrogenase complex, catalyzes the overall conversion of pyruvate to acetyl-CoA and CO(2), and thereby links cytoplasmic glycolysis and the mitochondrial tricarboxylic acid (TCA) cycle. This is Dihydrolipoyllysine-residue acetyltransferase component of pyruvate dehydrogenase complex, mitochondrial from Mesocricetus auratus (Golden hamster).